Here is a 53-residue protein sequence, read N- to C-terminus: Toxin CjTL7 (53 aa).

The first 22 residues, 1–22 (MMIKVLLLLSSALVLFTPEAEG), serve as a signal peptide directing secretion. W51 is modified (tryptophan amide).

Post-translationally, contains 4 disulfide bonds.

The protein resides in the secreted. Its subcellular location is the nematocyst. Its function is as follows. In vivo, only causes a weak change in behavior in shrimps (C.multidentata) (slight twitching of the walking legs), but no lethal effect is observed. No activity is observed when injected into fly larvae (M.domestica). In Epiactis japonica (Sea anemone), this protein is Toxin CjTL7.